A 254-amino-acid polypeptide reads, in one-letter code: Alcohol dehydrogenase (254 aa).

10-33 (FVAGLGGIGLDTSREIVKSGPKNL) serves as a coordination point for NAD(+). Ser138 serves as a coordination point for substrate. Tyr151 (proton acceptor) is an active-site residue.

It belongs to the short-chain dehydrogenases/reductases (SDR) family. In terms of assembly, homodimer.

It catalyses the reaction a primary alcohol + NAD(+) = an aldehyde + NADH + H(+). The catalysed reaction is a secondary alcohol + NAD(+) = a ketone + NADH + H(+). The protein is Alcohol dehydrogenase (Adh) of Drosophila grimshawi (Hawaiian fruit fly).